We begin with the raw amino-acid sequence, 331 residues long: Isopentenyl-diphosphate delta-isomerase (331 aa).

4 to 5 (RK) contributes to the substrate binding site. FMN is bound by residues 59–61 (AMT), Ser-89, and Asn-116. Residue Gln-146 participates in substrate binding. Residue Glu-147 coordinates Mg(2+). FMN contacts are provided by residues Lys-178, Ser-203, Thr-208, 252-254 (GIR), and 273-274 (SR).

Belongs to the IPP isomerase type 2 family. Homooctamer. Dimer of tetramers. FMN serves as cofactor. Requires NADPH as cofactor. It depends on Mg(2+) as a cofactor.

The protein localises to the cytoplasm. It carries out the reaction isopentenyl diphosphate = dimethylallyl diphosphate. In terms of biological role, involved in the biosynthesis of isoprenoids. Catalyzes the 1,3-allylic rearrangement of the homoallylic substrate isopentenyl (IPP) to its allylic isomer, dimethylallyl diphosphate (DMAPP). The chain is Isopentenyl-diphosphate delta-isomerase from Streptococcus mutans serotype c (strain ATCC 700610 / UA159).